A 70-amino-acid polypeptide reads, in one-letter code: uncharacterized protein (70 aa).

This is an uncharacterized protein from Dictyostelium discoideum (Social amoeba).